The chain runs to 120 residues: Large ribosomal subunit protein bL20 (120 aa).

This sequence belongs to the bacterial ribosomal protein bL20 family.

Functionally, binds directly to 23S ribosomal RNA and is necessary for the in vitro assembly process of the 50S ribosomal subunit. It is not involved in the protein synthesizing functions of that subunit. The sequence is that of Large ribosomal subunit protein bL20 from Paracidovorax citrulli (strain AAC00-1) (Acidovorax citrulli).